The primary structure comprises 355 residues: Glucose-6-phosphatase 2 (355 aa).

Residues 1–24 (MDFLHRSGVLIIHHLQEDYRTYYG) lie on the Lumenal side of the membrane. A helical transmembrane segment spans residues 25 to 45 (FLNFMSNVGDPRNIFSIYFPL). The Cytoplasmic segment spans residues 46-56 (WFQLNQNVGTK). A helical membrane pass occupies residues 57 to 77 (MIWVAVIGDWFNLIFKWILFG). Over 78–115 (HRPYWWIQETEIYPNHSSPCLEQFPTTCETGPGSPSGH) the chain is Lumenal. A substrate-binding site is contributed by Arg79. Asn92 carries an N-linked (GlcNAc...) asparagine glycan. His115 serves as the catalytic Proton donor. Residues 116–136 (AMGSSCVWYVMVTAALSYTIS) form a helical membrane-spanning segment. Residues 137–146 (RMEESSVTLH) lie on the Cytoplasmic side of the membrane. A helical transmembrane segment spans residues 147–167 (RLTWSFLWSVFWLIQISVCIS). A topological domain (lumenal) is located at residue Arg168. A substrate-binding site is contributed by Arg168. A helical transmembrane segment spans residues 169-189 (VFIATHFPHQVILGVIGGMLV). His174 serves as the catalytic Nucleophile. The Cytoplasmic segment spans residues 190-211 (AEAFEHTPGVHMASLSVYLKTN). The helical transmembrane segment at 212–232 (VFLFLFALGFYLLLRLFGIDL) threads the bilayer. At 233–252 (LWSVPIAKKWCANPDWIHID) the chain is on the lumenal side. The helical transmembrane segment at 253-273 (STPFAGLVRNLGVLFGLGFAI) threads the bilayer. At 274 to 290 (NSEMFLRSCQGENGTKP) the chain is on the cytoplasmic side. A helical membrane pass occupies residues 291 to 307 (SFRLLCALTSLTTMQLY). The Lumenal segment spans residues 308 to 318 (RFIKIPTHAEP). Residues 319–339 (LFYLLSFCKSASIPLMVVALI) form a helical membrane-spanning segment. Over 340-355 (PYCVHMLMRPGDKKTK) the chain is Cytoplasmic. The Prevents secretion from ER motif lies at 352–355 (KKTK).

It belongs to the glucose-6-phosphatase family. Post-translationally, N-glycosylated; the non-glycosylated form is more unstable and is degraded through the proteasome. In terms of tissue distribution, specifically expressed in pancreatic islet cells, in particular those of beta-cell origin. Not detected in testis, kidney, muscle, liver, lung, spleen, brain, pituitary, gastric fundus or heart.

It is found in the endoplasmic reticulum membrane. It carries out the reaction D-glucose 6-phosphate + H2O = D-glucose + phosphate. It participates in carbohydrate biosynthesis; gluconeogenesis. In terms of biological role, may hydrolyze glucose-6-phosphate to glucose in the endoplasmic reticulum. May be responsible for glucose production through glycogenolysis and gluconeogenesis. This chain is Glucose-6-phosphatase 2 (G6pc2), found in Mus musculus (Mouse).